The following is a 374-amino-acid chain: Pectate lyase 2 (374 aa).

An N-terminal signal peptide occupies residues 1–22 (MKYLLPTAATGLLLLAAQPAVA). C93 and C176 are oxidised to a cystine. The Ca(2+) site is built by D150, D152, E187, and D191. The active site involves R239. A disulfide bond links C350 and C373.

This sequence belongs to the polysaccharide lyase 1 family. PLADES subfamily. It depends on Ca(2+) as a cofactor.

Its subcellular location is the secreted. It carries out the reaction Eliminative cleavage of (1-&gt;4)-alpha-D-galacturonan to give oligosaccharides with 4-deoxy-alpha-D-galact-4-enuronosyl groups at their non-reducing ends.. The protein operates within glycan metabolism; pectin degradation; 2-dehydro-3-deoxy-D-gluconate from pectin: step 2/5. In terms of biological role, involved in maceration and soft-rotting of plant tissue. This chain is Pectate lyase 2 (pel2), found in Pectobacterium atrosepticum (strain SCRI 1043 / ATCC BAA-672) (Erwinia carotovora subsp. atroseptica).